A 253-amino-acid polypeptide reads, in one-letter code: Cholesterol ring-cleaving hydrolase IpdB subunit (253 aa).

It belongs to the 3-oxoacid CoA-transferase subunit B family. In terms of assembly, heterotetramer composed of 2 IpdA subunits and 2 IpdB subunits.

The catalysed reaction is (3E)-2-(2-carboxylatoethyl)-3-methyl-6-oxocyclohex-1-ene-1-carboxyl-CoA + H2O = 6-methyl-3,7-dioxodecanedioyl-CoA. It functions in the pathway steroid metabolism; cholesterol degradation. Its function is as follows. Involved in the final steps of cholesterol and steroid degradation. Opens the last steroid ring of cholesterol by catalyzing the hydrolysis of (3E)-2-(2-carboxylatoethyl)-3-methyl-6-oxocyclohex-1-ene-1-carboxyl-CoA (COCHEA-CoA) to 6-methyl-3,7-dioxodecanedioyl-CoA (MeDODA-CoA). This Rhodococcus jostii (strain RHA1) protein is Cholesterol ring-cleaving hydrolase IpdB subunit.